Consider the following 530-residue polypeptide: UPF0422 protein lpp3030 (530 aa).

Positions 1–19 are cleaved as a signal peptide; sequence MKFKKIILALACLSSPLYA. A coiled-coil region spans residues 20–66; that stretch reads DQDQQLKSEIQRLQHQAEDLQAQLNRLQKQLANHKSSQQKHEQQAAA. The interval 50–81 is disordered; the sequence is LANHKSSQQKHEQQAAAKPAEPKSKPTTKSGA. Positions 63–79 are enriched in low complexity; sequence QAAAKPAEPKSKPTTKS.

It belongs to the UPF0422 family.

This Legionella pneumophila (strain Paris) protein is UPF0422 protein lpp3030.